The following is a 375-amino-acid chain: Erythronate-4-phosphate dehydrogenase (375 aa).

Residues S45 and T66 each coordinate substrate. Positions 146 and 175 each coordinate NAD(+). Residue R208 is part of the active site. Residue D232 coordinates NAD(+). The active site involves E237. Catalysis depends on H254, which acts as the Proton donor. G257 contacts NAD(+). Y258 serves as a coordination point for substrate.

Belongs to the D-isomer specific 2-hydroxyacid dehydrogenase family. PdxB subfamily. Homodimer.

Its subcellular location is the cytoplasm. The enzyme catalyses 4-phospho-D-erythronate + NAD(+) = (R)-3-hydroxy-2-oxo-4-phosphooxybutanoate + NADH + H(+). The protein operates within cofactor biosynthesis; pyridoxine 5'-phosphate biosynthesis; pyridoxine 5'-phosphate from D-erythrose 4-phosphate: step 2/5. Functionally, catalyzes the oxidation of erythronate-4-phosphate to 3-hydroxy-2-oxo-4-phosphonooxybutanoate. This chain is Erythronate-4-phosphate dehydrogenase, found in Yersinia enterocolitica serotype O:8 / biotype 1B (strain NCTC 13174 / 8081).